A 199-amino-acid polypeptide reads, in one-letter code: Tumor protein p53-inducible nuclear protein 2 (199 aa).

Positions 26 to 41 match the LIR motif; the sequence is VSEEDEVDGWLIIDLQ. Disordered regions lie at residues 41-69, 117-153, and 173-199; these read QDSYTAPPDPRASPAPAGRPPPAPSLMDE, LESGPPSPHPEAALPDQDLSDGELAPARREPRALHHA, and LQRARQRAERHTLSAKVLQRQNRARES. The span at 47-64 shows a compositional bias: pro residues; the sequence is PPDPRASPAPAGRPPPAP. Residue serine 136 is modified to Phosphoserine.

As to quaternary structure, interacts with VMP1, GABARAP, GABARAPL1, GABARAPL2, MAP1LC3A, MAP1LC3B, MAP1LC3C and THRA. As to expression, abundantly expressed in skeletal muscle and heart and expression is highly repressed in muscle from obese diabetic rats.

Its subcellular location is the cytoplasm. The protein resides in the cytosol. It is found in the nucleus. The protein localises to the PML body. It localises to the cytoplasmic vesicle. Its subcellular location is the autophagosome. In terms of biological role, dual regulator of transcription and autophagy. Positively regulates autophagy and is required for autophagosome formation and processing. May act as a scaffold protein that recruits MAP1LC3A, GABARAP and GABARAPL2 and brings them to the autophagosome membrane by interacting with VMP1 where, in cooperation with the BECN1-PI3-kinase class III complex, they trigger autophagosome development. Acts as a transcriptional activator of THRA. This chain is Tumor protein p53-inducible nuclear protein 2 (Tp53inp2), found in Rattus norvegicus (Rat).